A 239-amino-acid polypeptide reads, in one-letter code: tRNA (guanine-N(1)-)-methyltransferase (239 aa).

S-adenosyl-L-methionine contacts are provided by residues glycine 110 and 129–134 (LGDFVL).

Belongs to the RNA methyltransferase TrmD family. As to quaternary structure, homodimer.

It is found in the cytoplasm. The catalysed reaction is guanosine(37) in tRNA + S-adenosyl-L-methionine = N(1)-methylguanosine(37) in tRNA + S-adenosyl-L-homocysteine + H(+). In terms of biological role, specifically methylates guanosine-37 in various tRNAs. The protein is tRNA (guanine-N(1)-)-methyltransferase of Clostridium beijerinckii (strain ATCC 51743 / NCIMB 8052) (Clostridium acetobutylicum).